The sequence spans 710 residues: Dihydroxyacetone synthase (710 aa).

Thiamine diphosphate is bound by residues histidine 78 and glycine 128–leucine 130. 3 residues coordinate Mg(2+): aspartate 169, asparagine 199, and valine 201. Asparagine 199 is a thiamine diphosphate binding site. Residues histidine 275, glutamate 433, and phenylalanine 461 each coordinate thiamine diphosphate. Residue glutamate 433 is the Proton donor of the active site. A Microbody targeting signal motif is present at residues asparagine 708–leucine 710.

This sequence belongs to the transketolase family. It depends on Mg(2+) as a cofactor. Requires Ca(2+) as cofactor. Mn(2+) is required as a cofactor. Co(2+) serves as cofactor. The cofactor is thiamine diphosphate.

The protein localises to the peroxisome. It carries out the reaction D-xylulose 5-phosphate + formaldehyde = dihydroxyacetone + D-glyceraldehyde 3-phosphate. In terms of biological role, this is the major methanol assimilatory enzyme from the methylotrophic Hansenula polymorpha. The sequence is that of Dihydroxyacetone synthase (DAS) from Pichia angusta (Yeast).